The following is a 185-amino-acid chain: Uroplakin-2 (185 aa).

The signal sequence occupies residues 1 to 26 (MASPWPVWTLSWILILLAVLVPGAAA). Positions 27-85 (DFNISSLSGLLSPVMTESLLVALPPCHLTGGNATLTVRRANDSKVVRSSFVVPPCRGRR) are excised as a propeptide. Residues asparagine 29, asparagine 58, and asparagine 67 are each glycosylated (N-linked (GlcNAc...) asparagine). Over 86 to 156 (ELVSVVDSGS…IGLAMARTGG (71 aa)) the chain is Lumenal. A helical transmembrane segment spans residues 157 to 177 (MVVITVLLSVAMFLLVLGLII). At 178 to 185 (ALALGARK) the chain is on the cytoplasmic side.

It belongs to the uroplakin-2 family. Interacts with uroplakin-1a (UPK1A). In terms of tissue distribution, bladder epithelium.

Its subcellular location is the cell membrane. Functionally, component of the asymmetric unit membrane (AUM); a highly specialized biomembrane elaborated by terminally differentiated urothelial cells. May play an important role in regulating the assembly of the AUM. The chain is Uroplakin-2 (UPK2) from Bos taurus (Bovine).